The chain runs to 124 residues: Small ribosomal subunit protein uS12 (124 aa).

Aspartate 89 is subject to 3-methylthioaspartic acid.

This sequence belongs to the universal ribosomal protein uS12 family. Part of the 30S ribosomal subunit. Contacts proteins S8 and S17. May interact with IF1 in the 30S initiation complex.

With S4 and S5 plays an important role in translational accuracy. In terms of biological role, interacts with and stabilizes bases of the 16S rRNA that are involved in tRNA selection in the A site and with the mRNA backbone. Located at the interface of the 30S and 50S subunits, it traverses the body of the 30S subunit contacting proteins on the other side and probably holding the rRNA structure together. The combined cluster of proteins S8, S12 and S17 appears to hold together the shoulder and platform of the 30S subunit. This is Small ribosomal subunit protein uS12 from Edwardsiella ictaluri (strain 93-146).